A 211-amino-acid chain; its full sequence is Redox-sensing transcriptional repressor Rex (211 aa).

Positions Leu18–Phe57 form a DNA-binding region, H-T-H motif. Position 92-97 (Gly92–Gly97) interacts with NAD(+).

Belongs to the transcriptional regulatory Rex family. In terms of assembly, homodimer.

Its subcellular location is the cytoplasm. Modulates transcription in response to changes in cellular NADH/NAD(+) redox state. The polypeptide is Redox-sensing transcriptional repressor Rex (Shouchella clausii (strain KSM-K16) (Alkalihalobacillus clausii)).